An 876-amino-acid polypeptide reads, in one-letter code: SED5-binding protein 2 (876 aa).

S51 is subject to Phosphoserine. The tract at residues 164–189 is zinc finger-like; sequence CRRCRSYMNPFVVFINQGRKWQCNIC. Over residues 300 to 324 the composition is skewed to acidic residues; that stretch reads VSDEDDEESDGEEEDEDEEEEDVDN. The disordered stretch occupies residues 300-326; it reads VSDEDDEESDGEEEDEDEEEEDVDNSE.

It belongs to the SEC23/SEC24 family. SEC24 subfamily. COPII is composed of at least five proteins: the SEC23/24 complex, the SEC13/31 complex and SAR1. Interacts with GRH1.

It is found in the cytoplasm. The protein localises to the golgi apparatus membrane. Its subcellular location is the endoplasmic reticulum membrane. Its function is as follows. Component of the COPII coat, that covers ER-derived vesicles involved in transport from the endoplasmic reticulum to the Golgi apparatus. COPII acts in the cytoplasm to promote the transport of secretory, plasma membrane, and vacuolar proteins from the endoplasmic reticulum to the Golgi complex. This is SED5-binding protein 2 (SFB2) from Saccharomyces cerevisiae (strain ATCC 204508 / S288c) (Baker's yeast).